Here is an 89-residue protein sequence, read N- to C-terminus: Cytochrome b-c1 complex subunit 6, mitochondrial (89 aa).

A mitochondrion-targeting transit peptide spans 1 to 13; it reads MGLEDERKMLTGS. The tract at residues 1–27 is disordered; that stretch reads MGLEDERKMLTGSGDPKEEEEEELVDP. Disulfide bonds link cysteine 35–cysteine 79 and cysteine 51–cysteine 65. Lysine 40 bears the N6-acetyllysine mark. At lysine 83 the chain carries N6-acetyllysine.

The protein belongs to the UQCRH/QCR6 family. As to quaternary structure, component of the ubiquinol-cytochrome c oxidoreductase (cytochrome b-c1 complex, complex III, CIII), a multisubunit enzyme composed of 11 subunits. The complex is composed of 3 respiratory subunits cytochrome b, cytochrome c1 and Rieske protein UQCRFS1, 2 core protein subunits UQCRC1/QCR1 and UQCRC2/QCR2, and 6 low-molecular weight protein subunits UQCRH/QCR6, UQCRB/QCR7, UQCRQ/QCR8, UQCR10/QCR9, UQCR11/QCR10 and subunit 9, the cleavage product of Rieske protein UQCRFS1. The complex exists as an obligatory dimer and forms supercomplexes (SCs) in the inner mitochondrial membrane with NADH-ubiquinone oxidoreductase (complex I, CI) and cytochrome c oxidase (complex IV, CIV), resulting in different assemblies (supercomplex SCI(1)III(2)IV(1) and megacomplex MCI(2)III(2)IV(2)).

The protein resides in the mitochondrion inner membrane. In terms of biological role, component of the ubiquinol-cytochrome c oxidoreductase, a multisubunit transmembrane complex that is part of the mitochondrial electron transport chain which drives oxidative phosphorylation. The respiratory chain contains 3 multisubunit complexes succinate dehydrogenase (complex II, CII), ubiquinol-cytochrome c oxidoreductase (cytochrome b-c1 complex, complex III, CIII) and cytochrome c oxidase (complex IV, CIV), that cooperate to transfer electrons derived from NADH and succinate to molecular oxygen, creating an electrochemical gradient over the inner membrane that drives transmembrane transport and the ATP synthase. The cytochrome b-c1 complex catalyzes electron transfer from ubiquinol to cytochrome c, linking this redox reaction to translocation of protons across the mitochondrial inner membrane, with protons being carried across the membrane as hydrogens on the quinol. In the process called Q cycle, 2 protons are consumed from the matrix, 4 protons are released into the intermembrane space and 2 electrons are passed to cytochrome c. The sequence is that of Cytochrome b-c1 complex subunit 6, mitochondrial (Uqcrh) from Rattus norvegicus (Rat).